The primary structure comprises 255 residues: Imidazole glycerol phosphate synthase subunit HisF (255 aa).

Catalysis depends on residues Asp12 and Asp131.

This sequence belongs to the HisA/HisF family. In terms of assembly, heterodimer of HisH and HisF.

The protein resides in the cytoplasm. The catalysed reaction is 5-[(5-phospho-1-deoxy-D-ribulos-1-ylimino)methylamino]-1-(5-phospho-beta-D-ribosyl)imidazole-4-carboxamide + L-glutamine = D-erythro-1-(imidazol-4-yl)glycerol 3-phosphate + 5-amino-1-(5-phospho-beta-D-ribosyl)imidazole-4-carboxamide + L-glutamate + H(+). It participates in amino-acid biosynthesis; L-histidine biosynthesis; L-histidine from 5-phospho-alpha-D-ribose 1-diphosphate: step 5/9. Its function is as follows. IGPS catalyzes the conversion of PRFAR and glutamine to IGP, AICAR and glutamate. The HisF subunit catalyzes the cyclization activity that produces IGP and AICAR from PRFAR using the ammonia provided by the HisH subunit. In Vesicomyosocius okutanii subsp. Calyptogena okutanii (strain HA), this protein is Imidazole glycerol phosphate synthase subunit HisF.